Reading from the N-terminus, the 253-residue chain is Matrix protein (253 aa).

Residues 1-26 (MLSRIKQGIKTKRSSSSSSSRSKTGD) form a disordered region. Positions 55 to 58 (PTAP) match the PTAP/PSAP motif motif.

In terms of assembly, homomultimer. Interacts with viral nucleocapsid. Interacts with host TSG101.

Its subcellular location is the virion membrane. It localises to the host endomembrane system. It is found in the host nucleus membrane. Its function is as follows. Plays a major role in assembly and budding of virion, by recruiting cellular partners of the ESCRT complexes that play a key role in releasing the budding particle from the host membrane. Condensates the ribonucleocapsid core during virus assembly. The polypeptide is Matrix protein (M) (Bos taurus (Bovine)).